The primary structure comprises 213 residues: Type II restriction enzyme BamHI (213 aa).

4 residues coordinate Mg(2+): Glu-77, Asp-94, Glu-111, and Phe-112. Residue Glu-113 is the Proton acceptor of the active site.

As to quaternary structure, homodimer. Mg(2+) serves as cofactor.

The catalysed reaction is Endonucleolytic cleavage of DNA to give specific double-stranded fragments with terminal 5'-phosphates.. A P subtype restriction enzyme that recognizes the double-stranded sequence 5'-GGATCC-3' and cleaves after G-1. This Bacillus amyloliquefaciens (Bacillus velezensis) protein is Type II restriction enzyme BamHI.